A 368-amino-acid chain; its full sequence is MRILQNKTMKEQDNQLKIPEPLRADWFMVLVTIQADLIYNALVVLSSPFFLLYRSYRRAVVTVSAAEKAVKRAPAQIAGGAGRVVRRTWFGILGACHVSMVMVLALILAVVIGVGIVSLYVEKPVVVRDRLFFDYTEENPSAVFSFDKKKRSFSVPVGHSVHVSLVLWMPESEINRRIGVFQLKVELLSLKGETIARSSQPCMLRFRSKPIRLARTFVMSVPLIAGIANEAQTMRIDALKHQEKMPRTKAVRATLIPRAQTRTLPQLYEAEIVINSKPPWIKRMAYNWKWTLCVWTSMYLYVAILTALLWCFRPVLFPYTSSRTISESENLEIEVVEEEQEQVMERRRRERRNQPRRRNFATTQKSYT.

Transmembrane regions (helical) follow at residues 26–46 (WFMV…VVLS), 101–121 (VMVL…SLYV), and 292–312 (LCVW…LWCF). Residues 344 to 368 (MERRRRERRNQPRRRNFATTQKSYT) are disordered. The segment covering 346-359 (RRRRERRNQPRRRN) has biased composition (basic residues).

It belongs to the seipin family. In terms of tissue distribution, expressed in seeds and young seedlings. Not detected in leaves.

The protein resides in the endoplasmic reticulum membrane. In terms of biological role, involved in lipid metabolism and lipid droplet (LD) morphology, number, and size. Facilitates the formation of large-sized LDs and modulates triacylglycerol accumulation. Induces probably a reorganization of the endoplasmic reticulum into LD-forming domains. This is Seipin-1 from Arabidopsis thaliana (Mouse-ear cress).